A 613-amino-acid chain; its full sequence is UvrABC system protein C (613 aa).

Residues 13-92 form the GIY-YIG domain; sequence DKSGVYIMKD…IKKYKPKYNI (80 aa). Residues 204-239 form the UVR domain; it reads DEIINDLRIQMETAAEQLDFEKAAQLRNKITSIKQL.

It belongs to the UvrC family. Interacts with UvrB in an incision complex.

It is found in the cytoplasm. Its function is as follows. The UvrABC repair system catalyzes the recognition and processing of DNA lesions. UvrC both incises the 5' and 3' sides of the lesion. The N-terminal half is responsible for the 3' incision and the C-terminal half is responsible for the 5' incision. This is UvrABC system protein C from Ruminiclostridium cellulolyticum (strain ATCC 35319 / DSM 5812 / JCM 6584 / H10) (Clostridium cellulolyticum).